Here is a 176-residue protein sequence, read N- to C-terminus: Ribosome maturation factor RimM (176 aa).

The PRC barrel domain occupies 95-169; the sequence is EDEVYLFELE…TARIAPPPGL (75 aa).

Belongs to the RimM family. Binds ribosomal protein uS19.

The protein resides in the cytoplasm. Functionally, an accessory protein needed during the final step in the assembly of 30S ribosomal subunit, possibly for assembly of the head region. Essential for efficient processing of 16S rRNA. May be needed both before and after RbfA during the maturation of 16S rRNA. It has affinity for free ribosomal 30S subunits but not for 70S ribosomes. This is Ribosome maturation factor RimM from Nitratidesulfovibrio vulgaris (strain ATCC 29579 / DSM 644 / CCUG 34227 / NCIMB 8303 / VKM B-1760 / Hildenborough) (Desulfovibrio vulgaris).